The sequence spans 85 residues: Large ribosomal subunit protein bL27 (85 aa).

This sequence belongs to the bacterial ribosomal protein bL27 family.

The chain is Large ribosomal subunit protein bL27 from Pseudomonas fluorescens (strain SBW25).